The sequence spans 427 residues: 3-phosphoshikimate 1-carboxyvinyltransferase (427 aa).

Lys-22, Ser-23, and Arg-27 together coordinate 3-phosphoshikimate. Residue Lys-22 coordinates phosphoenolpyruvate. Phosphoenolpyruvate contacts are provided by Gly-96 and Arg-124. 3-phosphoshikimate is bound by residues Ser-169, Ser-170, Gln-171, Ser-197, Asp-313, Asn-336, and Lys-340. Gln-171 provides a ligand contact to phosphoenolpyruvate. Asp-313 acts as the Proton acceptor in catalysis. 3 residues coordinate phosphoenolpyruvate: Arg-344, Arg-386, and Lys-411.

It belongs to the EPSP synthase family. Monomer.

The protein resides in the cytoplasm. The enzyme catalyses 3-phosphoshikimate + phosphoenolpyruvate = 5-O-(1-carboxyvinyl)-3-phosphoshikimate + phosphate. Its pathway is metabolic intermediate biosynthesis; chorismate biosynthesis; chorismate from D-erythrose 4-phosphate and phosphoenolpyruvate: step 6/7. Its function is as follows. Catalyzes the transfer of the enolpyruvyl moiety of phosphoenolpyruvate (PEP) to the 5-hydroxyl of shikimate-3-phosphate (S3P) to produce enolpyruvyl shikimate-3-phosphate and inorganic phosphate. This chain is 3-phosphoshikimate 1-carboxyvinyltransferase, found in Salmonella choleraesuis (strain SC-B67).